The following is a 135-amino-acid chain: Large ribosomal subunit protein bL21 (135 aa).

Residues 109–128 (TLATAQSAPPSTSEATTDTT) are compositionally biased toward polar residues. The tract at residues 109–135 (TLATAQSAPPSTSEATTDTTGIPAAEE) is disordered.

Belongs to the bacterial ribosomal protein bL21 family. In terms of assembly, part of the 50S ribosomal subunit. Contacts protein L20.

Functionally, this protein binds to 23S rRNA in the presence of protein L20. The polypeptide is Large ribosomal subunit protein bL21 (Synechococcus sp. (strain JA-3-3Ab) (Cyanobacteria bacterium Yellowstone A-Prime)).